The following is a 105-amino-acid chain: Putative membrane protein insertion efficiency factor (105 aa).

Residues 76 to 105 (GHPGGVDPVPPGPHETPRKTSTHDDEPPSR) are disordered. Basic and acidic residues predominate over residues 90–105 (ETPRKTSTHDDEPPSR).

Belongs to the UPF0161 family.

The protein resides in the cell inner membrane. Functionally, could be involved in insertion of integral membrane proteins into the membrane. This chain is Putative membrane protein insertion efficiency factor, found in Chromohalobacter salexigens (strain ATCC BAA-138 / DSM 3043 / CIP 106854 / NCIMB 13768 / 1H11).